Here is a 104-residue protein sequence, read N- to C-terminus: A-type ATP synthase subunit F (104 aa).

It belongs to the V-ATPase F subunit family. As to quaternary structure, has multiple subunits with at least A(3), B(3), C, D, E, F, H, I and proteolipid K(x).

It is found in the cell membrane. Its function is as follows. Component of the A-type ATP synthase that produces ATP from ADP in the presence of a proton gradient across the membrane. This Thermoplasma volcanium (strain ATCC 51530 / DSM 4299 / JCM 9571 / NBRC 15438 / GSS1) protein is A-type ATP synthase subunit F.